We begin with the raw amino-acid sequence, 366 residues long: Envelope glycoprotein M (366 aa).

At 1 to 17 the chain is on the intravirion side; that stretch reads MMKASRSDTFMLRTWIQ. A helical membrane pass occupies residues 18-38; that stretch reads LLVLFVIMFIMSAILPIAASV. Residues 39–83 are Virion surface-facing; that stretch reads EGLGFPCYFPNLVDYSLLNLTLRNAAKHLTPTLFLEAPELFVYIT. The helical transmembrane segment at 84–104 threads the bilayer; the sequence is WSVLVDLASAIYYVVGALAIL. Residues 105-113 lie on the Intravirion side of the membrane; the sequence is QARKTHLTS. The helical transmembrane segment at 114-134 threads the bilayer; it reads MITLQTWINLVGSHTMLFIGI. The Virion surface portion of the chain corresponds to 135-153; it reads ARMWTLQLFIHVLSYKHVM. The chain crosses the membrane as a helical span at residues 154–174; that stretch reads LAAFIYFLHFCLSYMHTLSLV. Over 175–209 the chain is Intravirion; sequence SRNSPKWSVLLMEQHIPKQSLLSTILDYGKPLCVN. A helical transmembrane segment spans residues 210-230; sequence MYLSLLALEMLVFSLGFMMAI. Residues 231–235 lie on the Virion surface side of the membrane; it reads GNSFY. The chain crosses the membrane as a helical span at residues 236–256; it reads ILVSDTVLASINLYFVLTTFW. Over 257–269 the chain is Intravirion; sequence YMMTEMFLQDYLK. A helical membrane pass occupies residues 270-290; it reads LQFGFYLGVFSGSLILLLPVL. Residues 291-304 lie on the Virion surface side of the membrane; it reads RYEAVFVSANLHKT. A helical transmembrane segment spans residues 305–325; that stretch reads VAVNIAMIPAMCVIAMMFRLF. At 326–366 the chain is on the intravirion side; the sequence is RYSQQVRKPENSYTPLPKRFKKRRQKQDQQLIMVETSDEEL.

This sequence belongs to the herpesviridae glycoprotein M family. As to quaternary structure, interacts (via N-terminus) with gN (via N-terminus). The gM-gN heterodimer forms the gCII complex.

The protein localises to the virion membrane. It is found in the host Golgi apparatus. The protein resides in the host trans-Golgi network. It localises to the host endosome membrane. Its subcellular location is the host nucleus inner membrane. In terms of biological role, envelope glycoprotein important for virion assembly and egress. Plays a role in the correct incorporation of gH-gL into virion membrane. Directs the glycoprotein N (gN) to the host trans-Golgi network. In Saimiri sciureus (Common squirrel monkey), this protein is Envelope glycoprotein M.